Here is a 247-residue protein sequence, read N- to C-terminus: 5-oxoprolinase subunit A (247 aa).

Belongs to the LamB/PxpA family. As to quaternary structure, forms a complex composed of PxpA, PxpB and PxpC.

It carries out the reaction 5-oxo-L-proline + ATP + 2 H2O = L-glutamate + ADP + phosphate + H(+). Functionally, catalyzes the cleavage of 5-oxoproline to form L-glutamate coupled to the hydrolysis of ATP to ADP and inorganic phosphate. The sequence is that of 5-oxoprolinase subunit A from Klebsiella pneumoniae subsp. pneumoniae (strain ATCC 700721 / MGH 78578).